Reading from the N-terminus, the 642-residue chain is Chaperone protein HtpG (642 aa).

The interval 1 to 350 (MATDTQKETL…SNDLSLNVSR (350 aa)) is a; substrate-binding. The interval 351–567 (EILQNDHAVD…EYDMGLQMRR (217 aa)) is b. The c stretch occupies residues 568–642 (LLEQAGQKLP…MNKLIVQLSK (75 aa)).

The protein belongs to the heat shock protein 90 family. As to quaternary structure, homodimer.

It is found in the cytoplasm. Molecular chaperone. Has ATPase activity. In Marinomonas sp. (strain MWYL1), this protein is Chaperone protein HtpG.